A 958-amino-acid chain; its full sequence is Voltage-gated inwardly rectifying potassium channel KCNH6 (958 aa).

The Cytoplasmic segment spans residues 1-261; sequence MPVRRGHVAP…YSPFKAVWDW (261 aa). Residues 41 to 70 enclose the PAS domain; it reads IIYCNDGFCELFGYSRVEVMQQPCTCDFLT. The region spanning 92–144 is the PAC domain; it reads CKVDILYYRKDASSFRCLVDVVPVKNEDGAVIMFILNFEDLAQLLAKCSSRSL. Residues 262 to 282 traverse the membrane as a helical segment; sequence LILLLVIYTAVFTPYSAAFLL. The Extracellular portion of the chain corresponds to 283 to 298; that stretch reads SDQDESRRGACSYTCS. The chain crosses the membrane as a helical span at residues 299-319; that stretch reads PLTVVDLIVDIMFVVDIVINF. At 320 to 340 the chain is on the cytoplasmic side; that stretch reads RTTYVNTNDEVVSHPRRIAVH. The chain crosses the membrane as a helical span at residues 341-361; that stretch reads YFKGWFLIDMVAAIPFDLLIF. Residues 362–370 lie on the Extracellular side of the membrane; the sequence is RTGSDETTT. A helical; Voltage-sensor membrane pass occupies residues 371 to 391; sequence LIGLLKTARLLRLVRVARKLD. The Cytoplasmic segment spans residues 392–398; that stretch reads RYSEYGA. The chain crosses the membrane as a helical span at residues 399-419; it reads AVLFLLMCTFALIAHWLACIW. At 420–463 the chain is on the extracellular side; the sequence is YAIGNVERPYLEHKIGWLDSLGVQLGKRYNGSDPASGPSVQDKY. A glycan (N-linked (GlcNAc...) (complex) asparagine) is linked at N449. Positions 464-484 form an intramembrane region, pore-forming; the sequence is VTALYFTFSSLTSVGFGNVSP. The short motif at 476-481 is the Selectivity filter element; the sequence is SVGFGN. The Extracellular segment spans residues 485-490; that stretch reads NTNSEK. The chain crosses the membrane as a helical span at residues 491-511; the sequence is VFSICVMLIGSLMYASIFGNV. Over 512-958 the chain is Cytoplasmic; sequence SAIIQRLYSG…DPGFAGSWGH (447 aa). Positions 594-694 are cNMP-binding domain; it reads AFSGAGKGCL…IQRADLLEVL (101 aa). Disordered stretches follow at residues 720–751 and 845–910; these read GLHSSPRQAPGSQDHQGFFLSDNQSDAAPPLS and TTSP…PPLA. Residues 724-745 show a composition bias toward polar residues; sequence SPRQAPGSQDHQGFFLSDNQSD.

This sequence belongs to the potassium channel family. H (Eag) (TC 1.A.1.20) subfamily. Kv11.2/KCNH6 sub-subfamily. The potassium channel is probably composed of a homo- or heterotetrameric complex of pore-forming alpha subunits that can associate only within their subfamily. In terms of tissue distribution, expressed in prolactin-secreting adenomas.

The protein resides in the cell membrane. The catalysed reaction is K(+)(in) = K(+)(out). Functionally, pore-forming (alpha) subunit of voltage-gated inwardly rectifying potassium channel. Characterized by unusual gating kinetics by producing relatively small outward currents during membrane depolarization and large inward currents during subsequent repolarization which reflect a rapid inactivation during depolarization and quick recovery from inactivation but slow deactivation (closing) during repolarization. Activates even more slowly than KCNH2. The polypeptide is Voltage-gated inwardly rectifying potassium channel KCNH6 (Homo sapiens (Human)).